A 171-amino-acid chain; its full sequence is Shikimate kinase (171 aa).

14–19 (GAGKST) provides a ligand contact to ATP. Residue Ser-18 participates in Mg(2+) binding. Positions 36, 60, and 82 each coordinate substrate. Arg-120 is a binding site for ATP. A substrate-binding site is contributed by Arg-139. Gln-156 provides a ligand contact to ATP.

This sequence belongs to the shikimate kinase family. As to quaternary structure, monomer. The cofactor is Mg(2+).

The protein localises to the cytoplasm. The catalysed reaction is shikimate + ATP = 3-phosphoshikimate + ADP + H(+). Its pathway is metabolic intermediate biosynthesis; chorismate biosynthesis; chorismate from D-erythrose 4-phosphate and phosphoenolpyruvate: step 5/7. Its function is as follows. Catalyzes the specific phosphorylation of the 3-hydroxyl group of shikimic acid using ATP as a cosubstrate. This Shewanella oneidensis (strain ATCC 700550 / JCM 31522 / CIP 106686 / LMG 19005 / NCIMB 14063 / MR-1) protein is Shikimate kinase.